We begin with the raw amino-acid sequence, 387 residues long: EP300-interacting inhibitor of differentiation 3 (387 aa).

The segment covering 1-19 (MSEEKCSLTGGEEKGEELA) has biased composition (basic and acidic residues). The disordered stretch occupies residues 1–77 (MSEEKCSLTG…SDDLSPEAPC (77 aa)). Residues 32-72 (EEDDDDDEEALKKEEEEEEEEEEEDEEEEEEGPDSSSDDLS) are compositionally biased toward acidic residues.

Belongs to the NSE4 family. In terms of assembly, component of the SMC5-SMC6 complex which consists at least of SMC5, SMC6, NSMCE2, NSMCE1, NSMCE4A or EID3 and NSMCE3. NSMCE1, NSMCE4A or EID3 and NSMCE3 probably form a subcomplex that bridges the head domains of the SMC5:SMC6 heterodimer. Homodimer, and heterodimer with EID2. Interacts with the C-terminal region of CREBBP.

The protein localises to the nucleus. The protein resides in the cytoplasm. Its subcellular location is the chromosome. It is found in the telomere. Tissue-specific component of the SMC5-SMC6 complex, a complex involved in repair of DNA double-strand breaks by homologous recombination. The complex may promote sister chromatid homologous recombination by recruiting the SMC1-SMC3 cohesin complex to double-strand breaks. The complex is required for telomere maintenance via recombination and mediates sumoylation of shelterin complex (telosome) components. Its function is as follows. Acts as a repressor of nuclear receptor-dependent transcription possibly by interfering with CREBBP-dependent coactivation. May function as a coinhibitor of other CREBBP/EP300-dependent transcription factors. In Rattus norvegicus (Rat), this protein is EP300-interacting inhibitor of differentiation 3.